Consider the following 75-residue polypeptide: Conotoxin TsMEKL-011 (75 aa).

An N-terminal signal peptide occupies residues 1 to 19 (MEKLTILLLVAAVLMSTQA). Residues 20–45 (LIQRGGAKRRKVNFFSIREPGAEDWR) constitute a propeptide that is removed on maturation. Intrachain disulfides connect cysteine 49-cysteine 63, cysteine 56-cysteine 67, and cysteine 62-cysteine 71.

Belongs to the conotoxin O2 superfamily. In terms of tissue distribution, expressed by the venom duct.

Its subcellular location is the secreted. The chain is Conotoxin TsMEKL-011 from Conus tessulatus (Tessellate cone).